A 406-amino-acid chain; its full sequence is Solanesyl diphosphate synthase 1, chloroplastic (406 aa).

The N-terminal 71 residues, 1–71, are a transit peptide targeting the chloroplast; sequence MMTSCRNIDL…NGIGQSQTVS (71 aa). 3 residues coordinate isopentenyl diphosphate: lysine 126, arginine 129, and histidine 164. Aspartate 171 and aspartate 175 together coordinate Mg(2+). An an all-trans-polyprenyl diphosphate-binding site is contributed by arginine 180. Arginine 181 provides a ligand contact to isopentenyl diphosphate. The an all-trans-polyprenyl diphosphate site is built by lysine 257, threonine 258, glutamine 295, and lysine 312.

It belongs to the FPP/GGPP synthase family. Homodimer. Interacts with FBN5. The cofactor is Mg(2+). In terms of tissue distribution, higher expression in leaves than in roots.

The protein resides in the plastid. The protein localises to the chloroplast. It catalyses the reaction 5 isopentenyl diphosphate + (2E,6E,10E)-geranylgeranyl diphosphate = all-trans-nonaprenyl diphosphate + 5 diphosphate. The catalysed reaction is isopentenyl diphosphate + (2E,6E)-farnesyl diphosphate = (2E,6E,10E)-geranylgeranyl diphosphate + diphosphate. In terms of biological role, involved in providing solanesyl diphosphate for plastoquinone-9 (PQ-9) formation in plastids. Catalyzes the elongation of the prenyl side chain of PQ-9 in plastids. Contributes to the biosynthesis of plastochromanol-8 (PC-8) in plastids. Does not contribute to the synthesis of tocopherol or ubiquinone. PQ-9 and PC-8 are lipophilic antioxidants that act as protectant against photooxidative stress under high light stress conditions. Prefers geranylgeranyl diphosphate to farnesyl diphosphate as substrate. No activity with geranyl diphosphate or dimethylallyl diphosphate as substrate. The protein is Solanesyl diphosphate synthase 1, chloroplastic of Arabidopsis thaliana (Mouse-ear cress).